The chain runs to 182 residues: Constitutive photomorphogenesis protein 10 (182 aa).

The UBC core domain occupies 36 to 182 (ASGKRIQREM…AKEWTLRFAK (147 aa)).

It belongs to the ubiquitin-conjugating enzyme family. In terms of assembly, component of the CDD complex, at least composed of COP10, DET1 and DDB1A. Interacts with E3 ubiquitin ligase COP1. Interacts with E2 ubiquitin conjugating UBC5. Interacts with CSN3, CSN4 and CSN8 subunits of the COP9 complex. As to expression, expressed in flower, leaf, stem and seedling. Expressed at lower level in root.

Its subcellular location is the nucleus. In terms of biological role, component of light signal transduction machinery. Involved in repression of photomorphogenesis in darkness by participating in the CDD complex, a complex probably required to regulate the activity of ubiquitin conjugating enzymes (E2s). Repression of photomorphogenesis is probably mediated by ubiquitination and subsequent degradation of photomorphogenesis-promoting factors such as HY5, HYH and LAF1. Although strongly related to ubiquitin-conjugating enzyme, it has no catalytic activity by itself due to the absence of the conserved Cys active site at position 120. It can however enhance the activity of E2 conjugating enzymes. This is Constitutive photomorphogenesis protein 10 (COP10) from Arabidopsis thaliana (Mouse-ear cress).